Reading from the N-terminus, the 266-residue chain is Derlin-1 (266 aa).

Residues 1 to 20 lie on the Cytoplasmic side of the membrane; that stretch reads MSSPGEFYNSLPPITKAYGT. Residues 21 to 41 traverse the membrane as a helical segment; that stretch reads LCFFTTVATQLGLVAPVHIAL. Residues 42–55 lie on the Lumenal side of the membrane; that stretch reads IPELVLKQFQIWRL. Residues 56-76 form a helical membrane-spanning segment; sequence ITNLFFLGGFSINFGIRLLMI. Over 77-94 the chain is Cytoplasmic; the sequence is ARYGVQLEKGPFERRTAD. A helical transmembrane segment spans residues 95–115; sequence FLWMMIFGSFTLLVLSVIPFF. The Lumenal segment spans residues 116–156; the sequence is WTPFLGVSLVFMLLYLWSREFPNANISLYGLVTLKAFYLPW. Residues 157–177 form a helical membrane-spanning segment; that stretch reads AMLALDVIFGSPIMPDLLGII. Residues 178–266 lie on the Cytoplasmic side of the membrane; sequence AGHLYYFLTV…FRGRSYRLTD (89 aa). Positions 235–266 are disordered; sequence GGVGGGGAYSSARAPPESSNTAFRGRSYRLTD.

Belongs to the derlin family.

It localises to the endoplasmic reticulum membrane. May be involved in the degradation process of specific misfolded endoplasmic reticulum (ER) luminal proteins. This Arabidopsis thaliana (Mouse-ear cress) protein is Derlin-1 (DER1).